The primary structure comprises 681 residues: PAB-dependent poly(A)-specific ribonuclease subunit pan3-like (681 aa).

The segment at 9–38 (FSTNIPCRNEQLYGRCPYIDKGCFFQHKNQ) adopts a C3H1-type zinc-finger fold. Disordered stretches follow at residues 38–58 (QDNAPASSKPPSATAIDPQNS) and 82–123 (SSAS…TVSL). Over residues 41–50 (APASSKPPSA) the composition is skewed to low complexity. A compositionally biased stretch (polar residues) spans 96-106 (KSYSSALSSGK). S165 carries the phosphoserine modification.

It belongs to the protein kinase superfamily. PAN3 family.

The protein localises to the cytoplasm. Regulatory subunit of the poly(A)-nuclease (PAN) deadenylation complex. This is PAB-dependent poly(A)-specific ribonuclease subunit pan3-like from Schizosaccharomyces pombe (strain 972 / ATCC 24843) (Fission yeast).